Reading from the N-terminus, the 441-residue chain is Ribosomal protein uS12 methylthiotransferase RimO (441 aa).

The MTTase N-terminal domain occupies 7 to 117 (PKISFVSLGC…VLDAVHRAKP (111 aa)). C16, C52, C81, C148, C152, and C155 together coordinate [4Fe-4S] cluster. One can recognise a Radical SAM core domain in the interval 134-371 (LTPRHYAYLK…MARQQAISAR (238 aa)). Positions 374–440 (KRKVGTRQQI…AYDLHGTVAG (67 aa)) constitute a TRAM domain.

This sequence belongs to the methylthiotransferase family. RimO subfamily. [4Fe-4S] cluster serves as cofactor.

It localises to the cytoplasm. The enzyme catalyses L-aspartate(89)-[ribosomal protein uS12]-hydrogen + (sulfur carrier)-SH + AH2 + 2 S-adenosyl-L-methionine = 3-methylsulfanyl-L-aspartate(89)-[ribosomal protein uS12]-hydrogen + (sulfur carrier)-H + 5'-deoxyadenosine + L-methionine + A + S-adenosyl-L-homocysteine + 2 H(+). Its function is as follows. Catalyzes the methylthiolation of an aspartic acid residue of ribosomal protein uS12. In Rhodopseudomonas palustris (strain HaA2), this protein is Ribosomal protein uS12 methylthiotransferase RimO.